We begin with the raw amino-acid sequence, 328 residues long: 4-hydroxy-2-oxoglutarate aldolase, mitochondrial (328 aa).

The N-terminal 26 residues, 1–26 (MFGRTLFPARVIALGSGLFRTPLRTL), are a transit peptide targeting the mitochondrion. 76-77 (SN) is a binding site for substrate. K195 functions as the Schiff-base intermediate with substrate in the catalytic mechanism. Substrate-binding residues include S197 and G221.

Belongs to the DapA family. Homotetramer.

Its subcellular location is the mitochondrion. It catalyses the reaction (4S)-4-hydroxy-2-oxoglutarate = glyoxylate + pyruvate. The catalysed reaction is (4R)-4-hydroxy-2-oxoglutarate = glyoxylate + pyruvate. With respect to regulation, inhibited by divalent cations. Its function is as follows. Catalyzes the final step in the metabolic pathway of hydroxyproline. In Xenopus tropicalis (Western clawed frog), this protein is 4-hydroxy-2-oxoglutarate aldolase, mitochondrial (hoga1).